The chain runs to 292 residues: Nitrogenase iron protein 1 (292 aa).

Residue 12-19 (GKGGIGKS) coordinates ATP. Cys-101 is a [4Fe-4S] cluster binding site. Residue Arg-104 is modified to ADP-ribosylarginine; by dinitrogenase reductase ADP-ribosyltransferase. A [4Fe-4S] cluster-binding site is contributed by Cys-135.

This sequence belongs to the NifH/BchL/ChlL family. In terms of assembly, homodimer. Requires [4Fe-4S] cluster as cofactor. In terms of processing, the reversible ADP-ribosylation of Arg-104 inactivates the nitrogenase reductase and regulates nitrogenase activity.

It catalyses the reaction N2 + 8 reduced [2Fe-2S]-[ferredoxin] + 16 ATP + 16 H2O = H2 + 8 oxidized [2Fe-2S]-[ferredoxin] + 2 NH4(+) + 16 ADP + 16 phosphate + 6 H(+). Functionally, the key enzymatic reactions in nitrogen fixation are catalyzed by the nitrogenase complex, which has 2 components: the iron protein and the molybdenum-iron protein. This chain is Nitrogenase iron protein 1 (nifH1), found in Paenibacillus durus (Paenibacillus azotofixans).